Consider the following 924-residue polypeptide: Hexokinase-3 (924 aa).

The disordered stretch occupies residues Met1–Ser27. Hexokinase domains lie at Ser27–Ala471 and Ala477–Arg913. The tract at residues His84–Val220 is hexokinase small subdomain 1. Glu95–Ser102 is a binding site for ATP. Glu95 to Arg104 serves as a coordination point for D-glucose 6-phosphate. Residues Ser168, Thr185–Lys186, and Asn221–Asp222 each bind D-glucose. Residues Asn221 to Asp460 form a hexokinase large subdomain 1 region. D-glucose 6-phosphate is bound by residues Asp222 and Thr245. Residues Asn248, Glu273, and Gln304–Glu307 contribute to the D-glucose site. A D-glucose 6-phosphate-binding site is contributed by Gly426–Arg428. ATP is bound by residues Cys438 to Ile439 and Asp542 to Asn547. The tract at residues Asp531–Val662 is hexokinase small subdomain 2. Asp542 to Thr546 provides a ligand contact to D-glucose 6-phosphate. Residues Ser610–Phe611, Thr627–Lys628, and Asn663–Asp664 contribute to the D-glucose site. Positions Asn663–Asp902 are hexokinase large subdomain 2. Residues Asp664 and Thr687 each coordinate D-glucose 6-phosphate. Thr687 contacts ATP. D-glucose-binding positions include Thr689–Asn690, Glu715, and Glu749. ATP-binding positions include Gly754–Met755, Thr791–Ser795, and Thr870–Leu874. D-glucose 6-phosphate is bound by residues Asp868 to Thr870 and Ser904.

Belongs to the hexokinase family.

It carries out the reaction a D-hexose + ATP = a D-hexose 6-phosphate + ADP + H(+). It catalyses the reaction D-fructose + ATP = D-fructose 6-phosphate + ADP + H(+). The catalysed reaction is D-glucose + ATP = D-glucose 6-phosphate + ADP + H(+). Its pathway is carbohydrate metabolism; hexose metabolism. It participates in carbohydrate degradation; glycolysis; D-glyceraldehyde 3-phosphate and glycerone phosphate from D-glucose: step 1/4. With respect to regulation, hexokinase is an allosteric enzyme inhibited by its product D-glucose 6-phosphate. Catalyzes the phosphorylation of hexose, such as D-glucose and D-fructose, to hexose 6-phosphate (D-glucose 6-phosphate and D-fructose 6-phosphate, respectively). Mediates the initial step of glycolysis by catalyzing phosphorylation of D-glucose to D-glucose 6-phosphate. The sequence is that of Hexokinase-3 from Rattus norvegicus (Rat).